Here is a 3029-residue protein sequence, read N- to C-terminus: Polycystin-1-related protein (3029 aa).

An N-terminal signal peptide occupies residues 1 to 21 (MAKHLYLAFSLILVPFLVSKA). The Extracellular segment spans residues 22–1685 (KQTSNGEVPW…RDTDKLKNSP (1664 aa)). The region spanning 29–121 (VPWLVGCYRY…KNVASVYSTA (93 aa)) is the WSC domain. 2 PKD domains span residues 364–450 (EGHC…IKGV) and 546–634 (DHLF…PECY). The REJ domain maps to 633–1476 (CYTRGVAIVG…NPYFSDMNHT (844 aa)). Disordered regions lie at residues 754–773 (RKGPITLSASSSHDPDHPDE), 909–931 (CPSDDHSDRVTPSTTPMTDSNSP), and 989–1051 (TSAI…PNKP). Residues 918 to 931 (VTPSTTPMTDSNSP) show a composition bias toward polar residues. The segment covering 997 to 1013 (SGDVDDDEVNNDNDDDS) has biased composition (acidic residues). Positions 1020–1047 (TLPTPLSMTNANSVNKPIITTDTPSFNK) are enriched in polar residues. In terms of domain architecture, GAIN-B spans 1525–1671 (RNVHVINQTA…GFIQPPNSLH (147 aa)). 2 disulfide bridges follow: Cys-1624–Cys-1651 and Cys-1639–Cys-1653. A GPS region spans residues 1624 to 1671 (CFYWNKRGKHWASDGCRLEKSINHTLVCRCNHLTAFSGGFIQPPNSLH). Residues 1686–1706 (LTMVLVISILVMYFLLLGFCV) traverse the membrane as a helical segment. The Cytoplasmic portion of the chain corresponds to 1707–1895 (KADRHDKKKL…SYSRFTRAQR (189 aa)). Residues 1733-1851 (SRFQLSVQTG…GNGKVECELF (119 aa)) enclose the PLAT domain. Residues 1896–1916 (LSCCLSLLLSFLCVNIAWYRP) traverse the membrane as a helical segment. The Extracellular segment spans residues 1917–1933 (KIEVTEVLGVLDVSANS). The chain crosses the membrane as a helical span at residues 1934–1954 (IMIGVLGSLMVLPVNFLWIFF). Over 1955–2101 (FRYSRRSLSR…YRSKFSLPHG (147 aa)) the chain is Cytoplasmic. The helical transmembrane segment at 2102–2122 (FVYVAWFGCLITGTVTSAITI) threads the bilayer. Residues 2123-2140 (WYGLSFGWDLSVHWFQSL) are Extracellular-facing. The helical transmembrane segment at 2141–2161 (VFSLLESLLLSQPIMVLAFIF) threads the bilayer. Over 2162–2250 (YMSHKTKSGK…SLKNRVLRNY (89 aa)) the chain is Cytoplasmic. Residues 2251 to 2271 (VVELFVFIMFFVVTCALVFSV) traverse the membrane as a helical segment. Residues 2272–2462 (ADPDVYHLNQ…GYSYFIRFTK (191 aa)) are Extracellular-facing. The helical transmembrane segment at 2463-2483 (LLFVVFFLYLLQHEFFLALKM) threads the bilayer. Topologically, residues 2484 to 2496 (TFSYFTNFWRVYQ) are cytoplasmic. The chain crosses the membrane as a helical span at residues 2497-2517 (LLTIAISSACIVSYIHWSLSL). At 2518–2538 (YALLREVETERQSRVFYLSRQ) the chain is on the extracellular side. The helical transmembrane segment at 2539 to 2559 (ISWSQGFLQASYSLLLFLLLI) threads the bilayer. Over 2560–2586 (RCLHLLRPFRFVRHFGRILSTSISSLL) the chain is Cytoplasmic. The helical transmembrane segment at 2587–2607 (ACWVFGFILVVAFAHPGYLLF) threads the bilayer. Residues 2608–2651 (GSVHSSFKSFGDAFLLVTSFFRLEGVARYQDFALEEQTLLLSTY) are Extracellular-facing. The helical transmembrane segment at 2652–2672 (FALFLIGFCVIVRGSTAAVVL) threads the bilayer. Over 2673 to 3029 (HGIRCLGKRR…PVGQRVVSAM (357 aa)) the chain is Cytoplasmic. Positions 2704–2726 (KKPKKPRPNSVSDLEETDDEDDL) are disordered. Positions 2716-2726 (DLEETDDEDDL) are enriched in acidic residues.

Belongs to the polycystin family. In terms of assembly, heterodimer of 2 chains generated by proteolytic processing; the large extracellular N-terminal fragment and the membrane-bound C-terminal fragment predominantly remain associated and non-covalently linked. Autoproteolytically processed at the GPS region of the GAIN-B domain; this cleavage modulates receptor activity. In terms of tissue distribution, component of the acid-insoluble and acid-soluble organic matrix of the aragonitic skeleton (at protein level).

The protein resides in the membrane. In Acropora millepora (Staghorn coral), this protein is Polycystin-1-related protein.